A 122-amino-acid chain; its full sequence is Large ribosomal subunit protein bL12 (122 aa).

The protein belongs to the bacterial ribosomal protein bL12 family. In terms of assembly, homodimer. Part of the ribosomal stalk of the 50S ribosomal subunit. Forms a multimeric L10(L12)X complex, where L10 forms an elongated spine to which 2 to 4 L12 dimers bind in a sequential fashion. Binds GTP-bound translation factors.

In terms of biological role, forms part of the ribosomal stalk which helps the ribosome interact with GTP-bound translation factors. Is thus essential for accurate translation. The protein is Large ribosomal subunit protein bL12 of Mycoplasma genitalium (strain ATCC 33530 / DSM 19775 / NCTC 10195 / G37) (Mycoplasmoides genitalium).